Consider the following 285-residue polypeptide: MQIKSFLLAAAAAPAALGAAVNTIKPFNCGTDAPSRQHIQMTKELAEKEAAMAAEGIMTAQATINVNVYFHVVAASTALSDGYVTSTMINNQVATLNKAYAPHNIQFTLKGTDYTINSNWAVDGSELAMKKALRKGTYKDLNLYILKDLGDALGYCYFPTSVTSKSNDWYYDGCSILYDTLPGGSLTNYNLGHTSTHEIGHWFGLYHTFQGGCSGNGDYVSDTPAQASASSGCPTGRDSCPSQPGLDPIHNYMDYSYDTCYEEFTSGQRTRMTSYWNQYRANASV.

Positions 1–18 are cleaved as a signal peptide; it reads MQIKSFLLAAAAAPAALG. H197 contributes to the Zn(2+) binding site. E198 is an active-site residue. H201 serves as a coordination point for Zn(2+). The cysteines at positions 233 and 260 are disulfide-linked. An N-linked (GlcNAc...) asparagine glycan is attached at N282.

This sequence belongs to the peptidase M43B family.

It is found in the secreted. Functionally, secreted metalloproteinase that allows assimilation of proteinaceous substrates. In Neurospora crassa (strain ATCC 24698 / 74-OR23-1A / CBS 708.71 / DSM 1257 / FGSC 987), this protein is Extracellular metalloprotease NCU07200.